The primary structure comprises 76 residues: Sec-independent protein translocase protein TatA (76 aa).

Residues 1–21 (MGSFSIWHWLIVLLIVVLVFG) traverse the membrane as a helical segment. Positions 44–76 (RDGSTAPADPAQQVTANKSADANTVDVEAKQKS) are disordered. Residues 55 to 65 (QQVTANKSADA) show a composition bias toward polar residues.

It belongs to the TatA/E family. As to quaternary structure, the Tat system comprises two distinct complexes: a TatABC complex, containing multiple copies of TatA, TatB and TatC subunits, and a separate TatA complex, containing only TatA subunits. Substrates initially bind to the TatABC complex, which probably triggers association of the separate TatA complex to form the active translocon.

It is found in the cell inner membrane. Part of the twin-arginine translocation (Tat) system that transports large folded proteins containing a characteristic twin-arginine motif in their signal peptide across membranes. TatA could form the protein-conducting channel of the Tat system. This chain is Sec-independent protein translocase protein TatA, found in Methylibium petroleiphilum (strain ATCC BAA-1232 / LMG 22953 / PM1).